A 160-amino-acid chain; its full sequence is Transcription elongation factor GreA (160 aa).

The stretch at 10 to 37 (TLEGKAKLENELQELKTVKRKEVVERIK) forms a coiled coil.

This sequence belongs to the GreA/GreB family.

Functionally, necessary for efficient RNA polymerase transcription elongation past template-encoded arresting sites. The arresting sites in DNA have the property of trapping a certain fraction of elongating RNA polymerases that pass through, resulting in locked ternary complexes. Cleavage of the nascent transcript by cleavage factors such as GreA or GreB allows the resumption of elongation from the new 3'terminus. GreA releases sequences of 2 to 3 nucleotides. The chain is Transcription elongation factor GreA from Listeria welshimeri serovar 6b (strain ATCC 35897 / DSM 20650 / CCUG 15529 / CIP 8149 / NCTC 11857 / SLCC 5334 / V8).